A 197-amino-acid polypeptide reads, in one-letter code: uncharacterized protein (197 aa).

Helical transmembrane passes span 9-29 (IYIL…RFIL), 67-87 (LASL…ILML), 104-124 (IIAV…ISVI), and 160-180 (GLDL…MLVI).

It belongs to the YggT family.

The protein resides in the cell membrane. This is an uncharacterized protein from Pseudomonas aeruginosa (strain ATCC 15692 / DSM 22644 / CIP 104116 / JCM 14847 / LMG 12228 / 1C / PRS 101 / PAO1).